The sequence spans 465 residues: MLPLWTLSLLLGAVAGKEVCYERLGCFSDDSPWSGITERPLHILPWSPKDVNTRFLLYTNENPNNFQEVAADSSSISGSNFKTNRKTRFIIHGFIDKGEENWLANVCKNLFKVESVNCICVDWKGGSRTGYTQASQNIRIVGAEVAYFVEFLQSAFGYSPSNVHVIGHSLGAHAAGEAGRRTNGTIGRITGLDPAEPCFQGTPELVRLDPSDAKFVDVIHTDGAPIVPNLGFGMSQVVGHLDFFPNGGVEMPGCKKNILSQIVDIDGIWEGTRDFAACNHLRSYKYYTDSIVNPDGFAGFPCASYNVFTANKCFPCPSGGCPQMGHYADRYPGKTNDVGQKFYLDTGDASNFARWRYKVSVTLSGKKVTGHILVSLFGNKGNSKQYEIFKGTLKPDSTHSNEFDSDVDVGDLQMVKFIWYNNVINPTLPRVGASKIIVETNVGKQFNFCSPETVREEVLLTLTPC.

A signal peptide spans 1-16 (MLPLWTLSLLLGAVAG). 2 disulfides stabilise this stretch: C20–C26 and C107–C118. S169 acts as the Nucleophile in catalysis. N183 is a glycosylation site (N-linked (GlcNAc...) asparagine). D193 serves as the catalytic Charge relay system. E204, R207, D209, and D212 together coordinate Ca(2+). A disulfide bridge connects residues C254 and C278. Residue H280 is the Charge relay system of the active site. 3 cysteine pairs are disulfide-bonded: C302–C313, C316–C321, and C449–C465. The region spanning 355 to 465 (WRYKVSVTLS…EEVLLTLTPC (111 aa)) is the PLAT domain.

This sequence belongs to the AB hydrolase superfamily. Lipase family. Forms a 1:1 stoichiometric complex with (pro)colipase/CLPS.

Its subcellular location is the secreted. It carries out the reaction a triacylglycerol + H2O = a diacylglycerol + a fatty acid + H(+). The catalysed reaction is 1,2,3-tributanoylglycerol + H2O = dibutanoylglycerol + butanoate + H(+). It catalyses the reaction 1,2,3-tri-(9Z-octadecenoyl)-glycerol + H2O = di-(9Z)-octadecenoylglycerol + (9Z)-octadecenoate + H(+). The enzyme catalyses all-trans-retinyl hexadecanoate + H2O = all-trans-retinol + hexadecanoate + H(+). It carries out the reaction 1,2-di-(9Z-octadecenoyl)-glycerol + H2O = (9Z-octadecenoyl)-glycerol + (9Z)-octadecenoate + H(+). Its activity is regulated as follows. Inhibited by bile salts, is reactivated by (pro)colipase/CLPS. Plays an important role in fat metabolism. It preferentially splits the esters of long-chain fatty acids at positions 1 and 3, producing mainly 2-monoacylglycerol and free fatty acids, and shows considerably higher activity against insoluble emulsified substrates than against soluble ones. This chain is Pancreatic triacylglycerol lipase, found in Homo sapiens (Human).